We begin with the raw amino-acid sequence, 294 residues long: Elongation factor Ts (294 aa).

An involved in Mg(2+) ion dislocation from EF-Tu region spans residues 79-82 (TDFV).

The protein belongs to the EF-Ts family.

It localises to the cytoplasm. Associates with the EF-Tu.GDP complex and induces the exchange of GDP to GTP. It remains bound to the aminoacyl-tRNA.EF-Tu.GTP complex up to the GTP hydrolysis stage on the ribosome. The polypeptide is Elongation factor Ts (Geobacillus sp. (strain WCH70)).